The following is a 207-amino-acid chain: MIRIAIPTGRMLEQTLDFLRNFDKKLLDEEKGRKLRIRGERFEVFLAKPWDLPLYVEERVVDLGIIGRDVILEQERNLVNLLSLPFGYCKMVIAGYPHISLEKNGKEIKIATKYENIARKFLEDKWSKIKVIKLNGSVELGPILNISDFIVDIVETGKTLKENGLEIKEVLFESSACLVSNVASFVYLRDEILSFVKEVRKLNDKCN.

This sequence belongs to the ATP phosphoribosyltransferase family. Short subfamily. As to quaternary structure, heteromultimer composed of HisG and HisZ subunits.

It localises to the cytoplasm. The enzyme catalyses 1-(5-phospho-beta-D-ribosyl)-ATP + diphosphate = 5-phospho-alpha-D-ribose 1-diphosphate + ATP. The protein operates within amino-acid biosynthesis; L-histidine biosynthesis; L-histidine from 5-phospho-alpha-D-ribose 1-diphosphate: step 1/9. In terms of biological role, catalyzes the condensation of ATP and 5-phosphoribose 1-diphosphate to form N'-(5'-phosphoribosyl)-ATP (PR-ATP). Has a crucial role in the pathway because the rate of histidine biosynthesis seems to be controlled primarily by regulation of HisG enzymatic activity. In Dictyoglomus thermophilum (strain ATCC 35947 / DSM 3960 / H-6-12), this protein is ATP phosphoribosyltransferase.